The chain runs to 946 residues: Bifunctional glutamine synthetase adenylyltransferase/adenylyl-removing enzyme (946 aa).

The tract at residues 1-441 (MSLLNDAALH…EFNWVIGDDE (441 aa)) is adenylyl removase. The tract at residues 448 to 946 (DQALSELWAL…VIKIWEKFLD (499 aa)) is adenylyl transferase.

Belongs to the GlnE family. The cofactor is Mg(2+).

It catalyses the reaction [glutamine synthetase]-O(4)-(5'-adenylyl)-L-tyrosine + phosphate = [glutamine synthetase]-L-tyrosine + ADP. The enzyme catalyses [glutamine synthetase]-L-tyrosine + ATP = [glutamine synthetase]-O(4)-(5'-adenylyl)-L-tyrosine + diphosphate. In terms of biological role, involved in the regulation of glutamine synthetase GlnA, a key enzyme in the process to assimilate ammonia. When cellular nitrogen levels are high, the C-terminal adenylyl transferase (AT) inactivates GlnA by covalent transfer of an adenylyl group from ATP to specific tyrosine residue of GlnA, thus reducing its activity. Conversely, when nitrogen levels are low, the N-terminal adenylyl removase (AR) activates GlnA by removing the adenylyl group by phosphorolysis, increasing its activity. The regulatory region of GlnE binds the signal transduction protein PII (GlnB) which indicates the nitrogen status of the cell. The protein is Bifunctional glutamine synthetase adenylyltransferase/adenylyl-removing enzyme of Psychromonas ingrahamii (strain DSM 17664 / CCUG 51855 / 37).